Here is a 67-residue protein sequence, read N- to C-terminus: uncharacterized protein (67 aa).

This is an uncharacterized protein from Bacillus subtilis (strain 168).